Reading from the N-terminus, the 146-residue chain is MRLLQLLFRASPATLLLVLCLQLGANKAQDNTRKIIIKDFDIPKSVRPNEEVTATLAVQTELKECMVVKTYLISSVPLEGGFNYKYTACLCNENPKTFYWDFYTNRTVRIAAVVDVIRELGICPDDAAVIPIKNNRFYTIETLEVE.

A signal peptide spans Met1–Ala28. Residue Gln29 is modified to Pyrrolidone carboxylic acid. 2 cysteine pairs are disulfide-bonded: Cys65–Cys91 and Cys89–Cys123. Asn105 is a glycosylation site (N-linked (GlcNAc...) asparagine).

Belongs to the PIP family. Monomer. Interacts with AZGP1.

The protein resides in the secreted. This chain is Prolactin-inducible protein homolog (PIP), found in Symphalangus syndactylus (Siamang).